The following is a 285-amino-acid chain: Pantothenate synthetase (285 aa).

Residue 30-37 (MGNLHQGH) coordinates ATP. Residue His-37 is the Proton donor of the active site. Position 61 (Gln-61) interacts with (R)-pantoate. Gln-61 provides a ligand contact to beta-alanine. 149 to 152 (GQKD) serves as a coordination point for ATP. Gln-155 is a (R)-pantoate binding site. Residues Val-178 and 186-189 (LSSR) contribute to the ATP site.

It belongs to the pantothenate synthetase family. In terms of assembly, homodimer.

It localises to the cytoplasm. The catalysed reaction is (R)-pantoate + beta-alanine + ATP = (R)-pantothenate + AMP + diphosphate + H(+). Its pathway is cofactor biosynthesis; (R)-pantothenate biosynthesis; (R)-pantothenate from (R)-pantoate and beta-alanine: step 1/1. Functionally, catalyzes the condensation of pantoate with beta-alanine in an ATP-dependent reaction via a pantoyl-adenylate intermediate. This is Pantothenate synthetase from Aeromonas hydrophila subsp. hydrophila (strain ATCC 7966 / DSM 30187 / BCRC 13018 / CCUG 14551 / JCM 1027 / KCTC 2358 / NCIMB 9240 / NCTC 8049).